Reading from the N-terminus, the 473-residue chain is MTIKLYNTKTRRKEDFEPINKDDVRMYVCGPTVYDRAHLGNARPVIVFDVLYRLLRHTYGPDHVTYVRNFTDVDDKINARAAESGRSIAEITAETTQWFLDDMAAVGALEPSIKDRDHQRAMPRATQYIAQMVTMIEDLIAKGHAYAAEGHVLFAVESYSKYGALSGRSIDDMIAGARVEVAPYKRNPMDFVLWKPSDDATPGWAGPVVGGKSIGRGRPGWHIECSAMAHDLLGATFDIHGGGNDLMFPHHENEIAQSTCAGHNFANVWMHNEMLQVEGKKMSKSLGNFFTVRDLLDQGVPGEVIRFVMLSTHYRKPMDWTEKKREEAEETLWKWKKLTDGAESSRRPHLEIIAALKDDLNTPLAISILHRKFAEAKSDDDKNRFLSTLLLLGIGETWRDGVDVAVEEAFQTVSLIEALIESIEKARAQKDWATSDRTRDGLESAGVKVQISKDGVSWERGPSFDPAKLEALK.

Residue cysteine 29 participates in Zn(2+) binding. The short motif at proline 31–asparagine 41 is the 'HIGH' region element. Residues cysteine 225, histidine 250, and glutamate 254 each contribute to the Zn(2+) site. A 'KMSKS' region motif is present at residues lysine 281–serine 285. Lysine 284 is a binding site for ATP.

Belongs to the class-I aminoacyl-tRNA synthetase family. Monomer. Zn(2+) is required as a cofactor.

The protein localises to the cytoplasm. The enzyme catalyses tRNA(Cys) + L-cysteine + ATP = L-cysteinyl-tRNA(Cys) + AMP + diphosphate. The sequence is that of Cysteine--tRNA ligase from Roseobacter denitrificans (strain ATCC 33942 / OCh 114) (Erythrobacter sp. (strain OCh 114)).